The primary structure comprises 760 residues: Colleterpenol synthase (760 aa).

The tract at residues 14 to 335 (ASSGLRSKFR…YTRRYPSKAD (322 aa)) is terpene cyclase. Position 95 (Asp95) interacts with Mg(2+). Residues 95–99 (DDYYD) carry the DDXXD 1 motif. The NSE/DTE signature appears at 233–241 (NDLYSWPKE). Residues 336–759 (LRQPEVEFVD…LELVLRRLWI (424 aa)) form a prenyltransferase region. The segment at 359–400 (EEKVVSESVESLPTTEVEDEFSSSDASPGSVDQAISTPPSTT) is disordered. Over residues 391–400 (QAISTPPSTT) the composition is skewed to polar residues. Lys477, Arg480, and His509 together coordinate isopentenyl diphosphate. Mg(2+) is bound by residues Asp516 and Asp520. A DDXXD 2 motif is present at residues 516 to 520 (DDIED). Arg525 contributes to the dimethylallyl diphosphate binding site. Arg526 serves as a coordination point for isopentenyl diphosphate. Residues Lys605, Thr606, Gln643, Asn650, Lys660, and Lys670 each coordinate dimethylallyl diphosphate.

It in the N-terminal section; belongs to the terpene synthase family. The protein in the C-terminal section; belongs to the FPP/GGPP synthase family. As to quaternary structure, hexamer. Mg(2+) serves as cofactor.

The enzyme catalyses 5 isopentenyl diphosphate + dimethylallyl diphosphate = all-trans-hexaprenyl diphosphate + 5 diphosphate. The catalysed reaction is all-trans-hexaprenyl diphosphate + H2O = colleterpenol + diphosphate. Functionally, bifunctional terpene synthase that converts dimethylallyl diphosphate (DMAPP) and isopentenyl diphosphate (IPP) into colleterpenol as a single product. The C-terminal prenyltransferase (PT) domain of CgCS catalyzes formation of hexaprenyl diphosphate (HexPP), whereas the N-terminal terpene cyclase (TC) domain catalyzes the cyclization of HexPP to colleterpenol. The polypeptide is Colleterpenol synthase (Colletotrichum gloeosporioides (Anthracnose fungus)).